The chain runs to 205 residues: Cytochrome c oxidase subunit 3 (205 aa).

The next 5 helical transmembrane spans lie at 29–49, 73–93, 104–124, 144–164, and 184–204; these read TIVF…MYFV, LAIT…VFAA, WFLI…YEYF, ITTG…VVVL, and SYYW…IYFI.

Belongs to the cytochrome c oxidase subunit 3 family. As to quaternary structure, associates with subunits I, II and IV to form cytochrome c oxidase.

It localises to the cell membrane. It catalyses the reaction 4 Fe(II)-[cytochrome c] + O2 + 8 H(+)(in) = 4 Fe(III)-[cytochrome c] + 2 H2O + 4 H(+)(out). This Corynebacterium efficiens (strain DSM 44549 / YS-314 / AJ 12310 / JCM 11189 / NBRC 100395) protein is Cytochrome c oxidase subunit 3 (ctaE).